A 469-amino-acid chain; its full sequence is Glutamate-1-semialdehyde 2,1-aminomutase, chloroplastic (469 aa).

The transit peptide at 1–34 (MAGAAAAVASGISIRPVAAPKISRAPRSRSVVRA) directs the protein to the chloroplast. Lysine 309 carries the N6-(pyridoxal phosphate)lysine modification.

This sequence belongs to the class-III pyridoxal-phosphate-dependent aminotransferase family. HemL subfamily. Homodimer. It depends on pyridoxal 5'-phosphate as a cofactor.

It localises to the plastid. It is found in the chloroplast. The catalysed reaction is (S)-4-amino-5-oxopentanoate = 5-aminolevulinate. The protein operates within porphyrin-containing compound metabolism; protoporphyrin-IX biosynthesis; 5-aminolevulinate from L-glutamyl-tRNA(Glu): step 2/2. Its pathway is porphyrin-containing compound metabolism; chlorophyll biosynthesis. The sequence is that of Glutamate-1-semialdehyde 2,1-aminomutase, chloroplastic (GSA) from Hordeum vulgare (Barley).